A 338-amino-acid polypeptide reads, in one-letter code: NADPH dehydrogenase (338 aa).

FMN is bound at residue 22-25 (SPMC). Substrate is bound at residue Tyr-27. Positions 59 and 101 each coordinate FMN. Residue 163 to 166 (HAAH) participates in substrate binding. FMN contacts are provided by residues Arg-214 and 306–307 (GR).

This sequence belongs to the NADH:flavin oxidoreductase/NADH oxidase family. NamA subfamily. Homotetramer. Requires FMN as cofactor.

The catalysed reaction is A + NADPH + H(+) = AH2 + NADP(+). Its function is as follows. Catalyzes the reduction of the double bond of an array of alpha,beta-unsaturated aldehydes and ketones. It also reduces the nitro group of nitroester and nitroaromatic compounds. It could have a role in detoxification processes. The sequence is that of NADPH dehydrogenase from Listeria monocytogenes serotype 4a (strain HCC23).